A 1063-amino-acid chain; its full sequence is Alkane uptake protein B (1063 aa).

The signal sequence occupies residues 1-17 (MKYNKTLALIPAILLAA). Cysteine 18 carries the N-palmitoyl cysteine lipid modification. A lipid anchor (S-diacylglycerol cysteine) is attached at cysteine 18.

Interacts with the outer membrane protein AupA.

Its subcellular location is the cell inner membrane. Its function is as follows. Required for growth on alkanes. Probably involved in the uptake of micelle-solubilized alkanes. May facilitate the transfer of alkanes from the outer membrane to the inner membrane. In Marinobacter nauticus (strain ATCC 49840 / DSM 8798 / CIP 103578 / SP17) (Marinobacter hydrocarbonoclasticus), this protein is Alkane uptake protein B.